The sequence spans 523 residues: Probable E3 ubiquitin-protein ligase ZFP1 (523 aa).

Basic and acidic residues predominate over residues 18-28 (EQGHSHIHSES). The disordered stretch occupies residues 18–43 (EQGHSHIHSESFNRTGNDSSDQGAQH). Polar residues predominate over residues 29–40 (FNRTGNDSSDQG). The RING-type; atypical zinc-finger motif lies at 471–512 (CIICQEEYQVKECIGTLDCGHRYHEDCIKQWLMVKNLCPICK).

Belongs to the RING-type zinc finger family. As to quaternary structure, interacts with DJA6.

It carries out the reaction S-ubiquitinyl-[E2 ubiquitin-conjugating enzyme]-L-cysteine + [acceptor protein]-L-lysine = [E2 ubiquitin-conjugating enzyme]-L-cysteine + N(6)-ubiquitinyl-[acceptor protein]-L-lysine.. The protein operates within protein modification; protein ubiquitination. Probable E3 ubiquitin-protein ligase. This Oryza sativa subsp. japonica (Rice) protein is Probable E3 ubiquitin-protein ligase ZFP1.